Consider the following 90-residue polypeptide: 10.1 kDa protein (90 aa).

This is 10.1 kDa protein from Pseudomonas aeruginosa (Bacteriophage Pf1).